The following is a 130-amino-acid chain: Transcription antitermination protein NusB (130 aa).

This sequence belongs to the NusB family.

Involved in transcription antitermination. Required for transcription of ribosomal RNA (rRNA) genes. Binds specifically to the boxA antiterminator sequence of the ribosomal RNA (rrn) operons. In Sulfurovum sp. (strain NBC37-1), this protein is Transcription antitermination protein NusB.